The sequence spans 158 residues: MRCPYCQSEDTQVKDSRPAEDGAVIRRRRVCSVCGGRFTTFERVQLRDLMVVKKSGRRVPFDRDKLTRSIEVALRKRDVDSERVERAISGIVRQLESAGEAEVTSDEIGRLAMDALKGIDDIAYIRFASVYRNFSKAVDFHNVIDELTVSETGDNLET.

A zinc finger spans residues 3–34; the sequence is CPYCQSEDTQVKDSRPAEDGAVIRRRRVCSVC. The ATP-cone domain occupies 49 to 139; it reads LMVVKKSGRR…VYRNFSKAVD (91 aa).

It belongs to the NrdR family. Requires Zn(2+) as cofactor.

Functionally, negatively regulates transcription of bacterial ribonucleotide reductase nrd genes and operons by binding to NrdR-boxes. The protein is Transcriptional repressor NrdR of Brucella abortus (strain S19).